The sequence spans 483 residues: MKEEKEHRPKEKRVTLLTPAGATGSGGGTSGDSSKGEDKQDRNKEKKEALSKVVIRRLPPTLTKEQLQEHLQPMPEHDYFEFFSNDTSLYPHMYARAYINFKNQEDIILFRDRFDGYVFLDNKGQEYPAIVEFAPFQKAAKKKTKKRDTKVGTIDDDPEYRKFLESYATDNEKMTSTPETLLEEIEAKNRELIAKKTTPLLSFLKNKQRMREEKREERRRREIERKRQREEERRKWKEEEKRKRKDIEKLKKIDRIPERDKLKDEPKIKVHRFLLQAVNQKNLLKKPEKGDEKELDKREKAKKLDKENLSDERASGQSCTLPKRSDSELKDEKPKRPEDESGRDYREREREYERDQERILRERERLKRQEEERRRQKERYEKEKTFKRKEEEMKKEKDTLRDKGKKAESTESIGSSEKTEKKEEVVKRDRIRNKDRPAMQLYQPGARSRNRLCPPDDSTKSGDSAAERKQESGISHRKEGGEE.

Basic and acidic residues-rich tracts occupy residues 1–14 (MKEEKEHRPKEKRV) and 34–50 (SKGEDKQDRNKEKKEAL). Positions 1 to 51 (MKEEKEHRPKEKRVTLLTPAGATGSGGGTSGDSSKGEDKQDRNKEKKEALS) are disordered. The tract at residues 30–255 (SGDSSKGEDK…DIEKLKKIDR (226 aa)) is necessary for interaction with UPF2. The segment at 52 to 57 (KVVIRR) is binds to UPF2. Phosphothreonine occurs at positions 169 and 198. The disordered stretch occupies residues 206–483 (NKQRMREEKR…ISHRKEGGEE (278 aa)). Basic and acidic residues-rich tracts occupy residues 209 to 268 (RMRE…EPKI), 285 to 314 (KKPEKGDEKELDKREKAKKLDKENLSDERA), 323 to 409 (KRSD…KAES), and 417 to 437 (EKTEKKEEVVKRDRIRNKDRP). Position 310 is a phosphoserine (Ser310). Positions 424 to 483 (EVVKRDRIRNKDRPAMQLYQPGARSRNRLCPPDDSTKSGDSAAERKQESGISHRKEGGEE) are sufficient for association with EJC core. The interval 430–447 (RIRNKDRPAMQLYQPGAR) is necessary for interaction with RBM8A and for activating NMD. An Omega-N-methylarginine modification is found at Arg447. Basic and acidic residues predominate over residues 457-483 (DSTKSGDSAAERKQESGISHRKEGGEE).

The protein belongs to the RENT3 family. Found in a post-splicing messenger ribonucleoprotein (mRNP) complex. Core component of the mRNA splicing-dependent exon junction complex (EJC); the core complex contains CASC3, EIF4A3, MAGOH or MAGOHB, and RBM8A. The EJC core components EIF4A3 and the MAGOH-RBM8A dimer form a composite binding site for UPF3B which overlaps with the EJC binding site for WIBG. Interacts with EST1A, UPF2 and RBM8A. Interacts with CPSF6. Interacts with DHX34; the interaction is RNA-independent. In terms of tissue distribution, expressed in testis, uterus, prostate, heart, muscle, brain, spinal cord and placenta.

The protein localises to the nucleus. It localises to the cytoplasm. Involved in nonsense-mediated decay (NMD) of mRNAs containing premature stop codons by associating with the nuclear exon junction complex (EJC) and serving as link between the EJC core and NMD machinery. Recruits UPF2 at the cytoplasmic side of the nuclear envelope and the subsequent formation of an UPF1-UPF2-UPF3 surveillance complex (including UPF1 bound to release factors at the stalled ribosome) is believed to activate NMD. In cooperation with UPF2 stimulates both ATPase and RNA helicase activities of UPF1. Binds spliced mRNA upstream of exon-exon junctions. In vitro, stimulates translation; the function is independent of association with UPF2 and components of the EJC core. The protein is Regulator of nonsense transcripts 3B of Homo sapiens (Human).